A 279-amino-acid chain; its full sequence is MKISNLLGVLVVFLAVVKGQKKDEGSDDSELLALVTVPDGPVIFSIEQVEQVAAPSTDKHLSKLKPKIAYDKVEPFEMAQPSESTITEKAAIKFRPKLYIANGCHAYPAVNKAGQISKGMKTADPTFATCGKPSKGTQVYGRSAWFGTVWAIMYAWYFPDIPLDWEYAIVWTNNPNVSNPVILGVTVSNSEGSTTSQTPPDPAMVDGRSVKIAYNNKGLESSTTLGGTQNLVMWHQLTVEAQEALNKKASFNGVQVPMNDNHFLRNLEASWPFSKEYLQ.

An N-terminal signal peptide occupies residues 1–19 (MKISNLLGVLVVFLAVVKG). The short motif at 151–161 (AIMYAWYFPDI) is the Conserved undecapeptide motif element. An N-linked (GlcNAc...) asparagine glycan is attached at Asn176.

It belongs to the Necrosis inducing protein (NPP1) family.

It localises to the secreted. Functionally, secreted effector that acts as a pathogen-associated molecular pattern (PAMP) recognized by the plant immune system. Seems not to induce necrosis in Nicotiana benthamiana leaves. In Plasmopara viticola (Downy mildew of grapevine), this protein is NLP effector protein 9.